The sequence spans 286 residues: Aquaporin NIP1-3 (286 aa).

Positions 1-44 (MAGGEHGVNGQHEETRAMEEGSRDHQARCENSEQDGGSKSSSNN) are disordered. Residues 11–31 (QHEETRAMEEGSRDHQARCEN) are compositionally biased toward basic and acidic residues. Residues 34–44 (QDGGSKSSSNN) are compositionally biased toward polar residues. The next 2 helical transmembrane spans lie at 56–76 (VIAE…AVAV) and 84–104 (VTFP…VYSV). The NPA 1 signature appears at 113–115 (NPA). Helical transmembrane passes span 131–153 (VPAY…RALF), 172–192 (SLAM…GVAT), and 200–220 (LAGL…GPIS). Residues 225-227 (NPA) carry the NPA 2 motif. The chain crosses the membrane as a helical span at residues 239–259 (YTGIWVYIAGPVFGAVAGAWA).

This sequence belongs to the MIP/aquaporin (TC 1.A.8) family. NIP (TC 1.A.8.12) subfamily.

Its subcellular location is the membrane. Functionally, aquaporins facilitate the transport of water and small neutral solutes across cell membranes. This is Aquaporin NIP1-3 (NIP1-3) from Oryza sativa subsp. japonica (Rice).